We begin with the raw amino-acid sequence, 222 residues long: MCLRLGGLSVGDFRKVLMKTGLVLVVLGHVSFITAALFHGTVLRYVGTPQDAVALQYCVVNILSVTSAIVVITSGIAAIVLSRYLPSTPLRWTVFSSSVACALLSLTCALGLLASIAMTFATQGKALLAACTFGSSELLALAPDCPFDPTRIYSSSLCLWGIALVLCVAENVFAVRCAQLTHQLLELRPWWGKSSHHMMRENPELVEGRDLLSCTSSEPLTL.

Helical transmembrane passes span Leu-22 to Val-42, Ile-62 to Ser-82, Ala-100 to Phe-120, and Ser-155 to Val-175.

It belongs to the TMEM54 family. As to expression, ubiquitously expressed in cancer cell lines.

The protein localises to the membrane. The chain is Transmembrane protein 54 (TMEM54) from Homo sapiens (Human).